The following is a 400-amino-acid chain: Subtilisin-like protease CPC735_047380 (400 aa).

The first 19 residues, 1 to 19, serve as a signal peptide directing secretion; the sequence is MARINVVVSFLAALAVVQA. A propeptide spanning residues 20 to 118 is cleaved from the precursor; the sequence is AQLLNLDGQK…IEPQRTFRAF (99 aa). Residues 35 to 116 form the Inhibitor I9 domain; that stretch reads SYVVVMNDGL…NYIEPQRTFR (82 aa). Residues 128–400 enclose the Peptidase S8 domain; the sequence is SWGLGRISHT…DKLLYNGSGQ (273 aa). Asn-153 is a glycosylation site (N-linked (GlcNAc...) asparagine). Active-site charge relay system residues include Asp-160 and His-191. N-linked (GlcNAc...) asparagine glycosylation is found at Asn-244 and Asn-252. The active-site Charge relay system is the Ser-346. Asn-396 carries N-linked (GlcNAc...) asparagine glycosylation.

Belongs to the peptidase S8 family.

The protein localises to the secreted. Its function is as follows. Secreted subtilisin-like serine protease with keratinolytic activity that contributes to pathogenicity. This chain is Subtilisin-like protease CPC735_047380, found in Coccidioides posadasii (strain C735) (Valley fever fungus).